Consider the following 110-residue polypeptide: Keratin, type II cytoskeletal 8 (110 aa).

The interval 1 to 12 is head; it reads MSTSGPRAFSSR. One can recognise an IF rod domain in the interval 1–110; the sequence is MSTSGPRAFS…LDIEIATYRK (110 aa). Phosphoserine occurs at positions 2, 4, 10, and 11. Arginine 12 carries the omega-N-methylarginine modification. The interval 13–25 is coil 1A; the sequence is FASFIDKVRWSLL. The segment at 26 to 39 is linker 1; the sequence is QQQKSNMDNMFESY. Lysine 29 participates in a covalent cross-link: Glycyl lysine isopeptide (Lys-Gly) (interchain with G-Cter in SUMO2). The tract at residues 40 to 79 is coil 1B; sequence INNLRDVDEAYMNKVELESRLEGLTDEINFLRQIHEEEIR. N6-acetyllysine is present on lysine 53. Residues serine 80 and serine 85 each carry the phosphoserine modification. A linker 12 region spans residues 80–86; that stretch reads SLDMDSI. The tract at residues 87–110 is coil 2; that stretch reads IAEVRHGDDLRRLALDIEIATYRK. The tract at residues 88–99 is necessary for interaction with PNN; that stretch reads AEVRHGDDLRRL. Lysine 110 is covalently cross-linked (Glycyl lysine isopeptide (Lys-Gly) (interchain with G-Cter in SUMO2)).

It belongs to the intermediate filament family. As to quaternary structure, heterotetramer of two type I and two type II keratins. Forms a heterodimer with KRT18. Associates with KRT20. Interacts with PNN. When associated with KRT19, interacts with DMD. Interacts with TCHP. Interacts with APEX1. Interacts with GPER1. Interacts with EPPK1. Interacts with PKP1 and PKP2. Post-translationally, O-glycosylated. O-GlcNAcylation at multiple sites increases solubility, and decreases stability by inducing proteasomal degradation. O-glycosylated (O-GlcNAcylated), in a cell cycle-dependent manner.

Its subcellular location is the cytoplasm. It localises to the nucleus. It is found in the nucleoplasm. The protein resides in the nucleus matrix. Together with KRT19, helps to link the contractile apparatus to dystrophin at the costameres of striated muscle. The chain is Keratin, type II cytoskeletal 8 from Mesocricetus auratus (Golden hamster).